A 434-amino-acid polypeptide reads, in one-letter code: Forkhead box protein A2-A (434 aa).

A DNA-binding region (fork-head) is located at residues 149 to 243 (KPPYSYISLI…ENGCYLRRQK (95 aa)). Over residues 249–262 (KKPSLREGGGKKLS) the composition is skewed to basic and acidic residues. Disordered stretches follow at residues 249-339 (KKPS…QSHL) and 408-434 (SGLESSPITSDTSYYQGGYSRPIMNSS). 2 stretches are compositionally biased toward low complexity: residues 263 to 291 (EGASSVGSAANSSSESSVGNESPHSSSSP) and 317 to 333 (ASQAQHLLSQHHSVLSH). A compositionally biased stretch (polar residues) spans 408 to 422 (SGLESSPITSDTSYY).

In terms of tissue distribution, at gastrula stage, expressed in both the anterior and posterior endoderm, with endodermal expression persisting into early tailbud stages. Expression is absent in gastrula stage ectoderm. During tailbud stages, expressed in the pharyngeal region, the neural floor plate, the midbrain, hindbrain and in cranial neural crest cells. Expressed in the foregut of hatching larvae. In tadpoles, expressed in the pharyngeal pouches and in other anterior endodermal regions. Within the tadpole nervous system, expressed in the neural floor plate, at high levels in the ventral midbrain and hindbrain, and at lower levels in the spinal cord. Expressed in the adult lung and brain.

The protein localises to the nucleus. Functionally, acts as a transcriptional activator during early development, limiting the extent of mesoderm formation in the gastrula. Binds to DNA via the target sequence 5'-GT[AC]AACA-3', with 5'-GTAAACA-3' being the preferred binding site. The protein is Forkhead box protein A2-A (foxa2-a) of Xenopus laevis (African clawed frog).